A 346-amino-acid polypeptide reads, in one-letter code: D-alanine--D-alanine ligase (346 aa).

The ATP-grasp domain maps to 133 to 327 (KLYAKSVGVK…TLADQIPLEK (195 aa)). 159–211 (LRFPCIIKPARLGSSIGISIVKDEKDLEYAKDVGFEFDNDLVVEEFKNNIKEY) is an ATP binding site. Residues Asp-284, Glu-296, and Asn-298 each contribute to the Mg(2+) site.

Belongs to the D-alanine--D-alanine ligase family. Mg(2+) is required as a cofactor. It depends on Mn(2+) as a cofactor.

It is found in the cytoplasm. It carries out the reaction 2 D-alanine + ATP = D-alanyl-D-alanine + ADP + phosphate + H(+). Its pathway is cell wall biogenesis; peptidoglycan biosynthesis. Functionally, cell wall formation. This Campylobacter jejuni subsp. doylei (strain ATCC BAA-1458 / RM4099 / 269.97) protein is D-alanine--D-alanine ligase.